A 443-amino-acid polypeptide reads, in one-letter code: Histidinol dehydrogenase (443 aa).

Residues Y141, Q203, and N226 each coordinate NAD(+). Residues S249, Q271, and H274 each coordinate substrate. Zn(2+)-binding residues include Q271 and H274. Active-site proton acceptor residues include E339 and H340. Substrate-binding residues include H340, D373, E427, and H432. D373 is a binding site for Zn(2+). H432 contacts Zn(2+).

Belongs to the histidinol dehydrogenase family. It depends on Zn(2+) as a cofactor.

The enzyme catalyses L-histidinol + 2 NAD(+) + H2O = L-histidine + 2 NADH + 3 H(+). It participates in amino-acid biosynthesis; L-histidine biosynthesis; L-histidine from 5-phospho-alpha-D-ribose 1-diphosphate: step 9/9. Catalyzes the sequential NAD-dependent oxidations of L-histidinol to L-histidinaldehyde and then to L-histidine. The protein is Histidinol dehydrogenase of Chlorobium luteolum (strain DSM 273 / BCRC 81028 / 2530) (Pelodictyon luteolum).